Here is a 292-residue protein sequence, read N- to C-terminus: Probable septum site-determining protein MinC (292 aa).

Residues 109 to 188 (QVIDTAPPND…PQSSSALVIT (80 aa)) are disordered. Positions 140–150 (QDDEADGEQAD) are enriched in acidic residues. Positions 171 to 185 (ANRPTATPPQSSSAL) are enriched in polar residues.

It belongs to the MinC family. As to quaternary structure, interacts with MinD and FtsZ.

In terms of biological role, cell division inhibitor that blocks the formation of polar Z ring septums. Rapidly oscillates between the poles of the cell to destabilize FtsZ filaments that have formed before they mature into polar Z rings. Prevents FtsZ polymerization. This chain is Probable septum site-determining protein MinC, found in Bordetella pertussis (strain Tohama I / ATCC BAA-589 / NCTC 13251).